Here is a 248-residue protein sequence, read N- to C-terminus: Probable transcriptional regulatory protein PSPTO_3980 (248 aa).

This sequence belongs to the TACO1 family.

It localises to the cytoplasm. This Pseudomonas syringae pv. tomato (strain ATCC BAA-871 / DC3000) protein is Probable transcriptional regulatory protein PSPTO_3980.